The sequence spans 951 residues: Valine--tRNA ligase (951 aa).

The short motif at 42–52 (PNVTGSLHMGH) is the 'HIGH' region element. The 'KMSKS' region signature appears at 554–558 (KMSKS). K557 is an ATP binding site. A coiled-coil region spans residues 882–951 (LIDKDAELAR…EEQKATIAAL (70 aa)).

The protein belongs to the class-I aminoacyl-tRNA synthetase family. ValS type 1 subfamily. Monomer.

Its subcellular location is the cytoplasm. It catalyses the reaction tRNA(Val) + L-valine + ATP = L-valyl-tRNA(Val) + AMP + diphosphate. Catalyzes the attachment of valine to tRNA(Val). As ValRS can inadvertently accommodate and process structurally similar amino acids such as threonine, to avoid such errors, it has a 'posttransfer' editing activity that hydrolyzes mischarged Thr-tRNA(Val) in a tRNA-dependent manner. The sequence is that of Valine--tRNA ligase from Vibrio vulnificus (strain CMCP6).